Reading from the N-terminus, the 443-residue chain is MTKTYHFIGIKGSGMSALALMLHQMGHKVQGSDVEKYYFTQRGLEQAGIQILPFDEKNITADVELIAGNAFRPDNNVEIAYADAQGYTYKRYHEFLGEFMKGFTSLGVAGAHGKTSTTGLLAHVMRNITDTSFLIGDGTGRGSANAQYFVFESDEYERHFAPYHPEYSIITNIDFDHPDYFTSLEDVFNAFNDYAKQVKNALFVFGEDEQLRRITANAPIYYYGLEDNNDFVAYDLKPSTSGSQFKVRHGEEELGEFQIPTFGKHNVMNATAVIANLYIAGFDLQLVAEHLKTFGGVKRRFTEKIVNDTVIIDDFAHHPTEIIATIDAARQKYPSKELVAIFQPHTFTRTIALLDEFADALNGADAVYLAQIYGSARETDNGQVKVEDLAAKINKKGGLVTVENTSPLLDHDNAVYVFMGAGDIQSYEYSFERLLSNLTNNVQ.

110–116 (GAHGKTS) is a binding site for ATP.

Belongs to the MurCDEF family.

The protein resides in the cytoplasm. The enzyme catalyses UDP-N-acetyl-alpha-D-muramate + L-alanine + ATP = UDP-N-acetyl-alpha-D-muramoyl-L-alanine + ADP + phosphate + H(+). The protein operates within cell wall biogenesis; peptidoglycan biosynthesis. Cell wall formation. This Streptococcus suis (strain 98HAH33) protein is UDP-N-acetylmuramate--L-alanine ligase.